A 354-amino-acid polypeptide reads, in one-letter code: Lysophosphatidic acid receptor 3 (354 aa).

The Extracellular segment spans residues 1-31 (MNECHYDKRMDFFYNRSNTDTADEWTGTKLV). Asparagine 15 carries an N-linked (GlcNAc...) asparagine glycan. The chain crosses the membrane as a helical span at residues 32–52 (IVLCVGTFFCLFIFFSNSLVI). Over 53–67 (AAVITNRKFHFPFYY) the chain is Cytoplasmic. The helical transmembrane segment at 68-88 (LLANLAAADFFAGIAYVFLMF) threads the bilayer. Residues 89-101 (NTGPVSKTLTVNR) lie on the Extracellular side of the membrane. The helical transmembrane segment at 102–124 (WFLRQGLLDTSLTASLANLLVIA) threads the bilayer. The Cytoplasmic portion of the chain corresponds to 125 to 146 (VERHMSIMRMRVHSNLTKKRVT). Residues 147 to 167 (LLILLVWAIAIFMGAVPTLGW) traverse the membrane as a helical segment. The Extracellular portion of the chain corresponds to 168–186 (NCLCNISACSSLAPIYSRS). N-linked (GlcNAc...) asparagine glycosylation occurs at asparagine 172. A helical membrane pass occupies residues 187–207 (YLIFWTVSNLLAFFIMVAVYV). Residues 208–240 (RIYMYVKRKTNVLSPHTSGSISRRRAPMKLMKT) are Cytoplasmic-facing. Residues 241–261 (VMTVLGAFVVCWTPGLVVLLL) form a helical membrane-spanning segment. At 262 to 276 (DGLNCKQCNVQHVKR) the chain is on the extracellular side. The helical transmembrane segment at 277–295 (WFLLLALLNSVMNPIIYSY) threads the bilayer. At 296-354 (KDEDMYNTMRKMICCALQDSNTERRPSRNPSTIHSRSETGSQYLEDSISQGPVCNKNGS) the chain is on the cytoplasmic side. Cysteine 309 carries S-palmitoyl cysteine lipidation. The disordered stretch occupies residues 315 to 354 (SNTERRPSRNPSTIHSRSETGSQYLEDSISQGPVCNKNGS). Residues 323-354 (RNPSTIHSRSETGSQYLEDSISQGPVCNKNGS) are compositionally biased toward polar residues.

The protein belongs to the G-protein coupled receptor 1 family. As to expression, most abundantly expressed in testes, kidney, and lung, with moderate levels in small intestine, and low levels in heart, stomach, spleen, and adult and perinatal brain. Little or no expression in embryonic brain, liver, or thymus.

It is found in the cell membrane. Functionally, receptor for lysophosphatidic acid (LPA), a mediator of diverse cellular activities. Seems to be coupled to the G(i)/G(o) and G(q) families of heteromeric G proteins. The sequence is that of Lysophosphatidic acid receptor 3 (Lpar3) from Mus musculus (Mouse).